Reading from the N-terminus, the 102-residue chain is 10 kDa heat shock protein, mitochondrial (102 aa).

N-acetylalanine is present on A2. The residue at position 8 (K8) is an N6-acetyllysine. K28 is modified (N6-succinyllysine). The residue at position 40 (K40) is an N6-acetyllysine; alternate. N6-malonyllysine; alternate occurs at positions 40, 54, and 56. An N6-succinyllysine; alternate mark is found at K40, K54, K56, K66, and K70. K56, K66, and K70 each carry N6-acetyllysine; alternate. The residue at position 79 (T79) is a Phosphothreonine. An N6-acetyllysine; alternate mark is found at K80 and K86. N6-succinyllysine; alternate occurs at positions 80 and 86. K99 carries the N6-acetyllysine modification.

The protein belongs to the GroES chaperonin family. In terms of assembly, homoheptamer arranged in a ring structure. 2 heptameric Hsp10 rings interact with a Hsp60 tetradecamer in the structure of a back-to-back double heptameric ring to form the symmetrical football complex.

Its subcellular location is the mitochondrion matrix. In terms of biological role, co-chaperonin implicated in mitochondrial protein import and macromolecular assembly. Together with Hsp60, facilitates the correct folding of imported proteins. May also prevent misfolding and promote the refolding and proper assembly of unfolded polypeptides generated under stress conditions in the mitochondrial matrix. The functional units of these chaperonins consist of heptameric rings of the large subunit Hsp60, which function as a back-to-back double ring. In a cyclic reaction, Hsp60 ring complexes bind one unfolded substrate protein per ring, followed by the binding of ATP and association with 2 heptameric rings of the co-chaperonin Hsp10. This leads to sequestration of the substrate protein in the inner cavity of Hsp60 where, for a certain period of time, it can fold undisturbed by other cell components. Synchronous hydrolysis of ATP in all Hsp60 subunits results in the dissociation of the chaperonin rings and the release of ADP and the folded substrate protein. This Rattus norvegicus (Rat) protein is 10 kDa heat shock protein, mitochondrial (Hspe1).